The sequence spans 767 residues: Protein NLP3 (767 aa).

3 disordered regions span residues 462-494 (ATPP…RKTK), 590-622 (INPT…CSSE), and 646-672 (HEDQ…KAKD). Residues 482–566 (SASSLENRKR…MDSVEGVQGS (85 aa)) form the RWP-RK domain. The stretch at 485–506 (SLENRKRKTKAEKDITLDTLRQ) forms a coiled coil. Composition is skewed to low complexity over residues 604–622 (PSSS…CSSE) and 655–667 (TSSL…ATTP). The PB1 domain occupies 673–759 (GMKVKAMFGD…ETIRILVHHP (87 aa)).

The protein resides in the nucleus. Its function is as follows. Probable transcription factor. In Arabidopsis thaliana (Mouse-ear cress), this protein is Protein NLP3 (NLP3).